Here is a 544-residue protein sequence, read N- to C-terminus: Putative pentatricopeptide repeat-containing protein At5g59200, chloroplastic (544 aa).

Residues 1–21 (MISSLAAITGGPSTFRRDPDS) form a disordered region. The N-terminal 25 residues, 1-25 (MISSLAAITGGPSTFRRDPDSNTLR), are a transit peptide targeting the chloroplast. PPR repeat units follow at residues 60–90 (DAFVVFELIRVCSTLDSVDYAYDVFSYVSNP), 91–125 (NVYLYTAMIDGFVSSGRSADGVSLYHRMIHNSVLP), 127–156 (NYVITSVLKACDLKVCREIHAQVLKLGFGS), 157–187 (SRSVGLKMMEIYGKSGELVNAKKMFDEMPDR), 188–218 (DHVAATVMINCYSECGFIKEALELFQDVKIK), 219–253 (DTVCWTAMIDGLVRNKEMNKALELFREMQMENVSA), 254–288 (NEFTAVCVLSACSDLGALELGRWVHSFVENQRMEL), 289–319 (SNFVGNALINMYSRCGDINEARRVFRVMRDK), 320–354 (DVISYNTMISGLAMHGASVEAINEFRDMVNRGFRP), 355–385 (NQVTLVALLNACSHGGLLDIGLEVFNSMKRV), and 391–421 (QIEHYGCIVDLLGRVGRLEEAYRFIENIPIE). The segment at 426–501 (MLGTLLSACK…EPGCSTIEVD (76 aa)) is type E motif. A type E(+) motif region spans residues 502-532 (NQIHEFLVGDIAHPHKEAIYQRLQELNRILR).

Belongs to the PPR family. PCMP-E subfamily.

Its subcellular location is the plastid. The protein resides in the chloroplast. In terms of biological role, involved in RNA editing event in chloroplasts. Required for the editing of a single site in rpl23 transcript. The chain is Putative pentatricopeptide repeat-containing protein At5g59200, chloroplastic (PCMP-E41) from Arabidopsis thaliana (Mouse-ear cress).